We begin with the raw amino-acid sequence, 634 residues long: Chaperone protein HtpG (634 aa).

The segment at 1–342 (MTVASHKETL…SNDLPLNISR (342 aa)) is a; substrate-binding. The interval 343 to 559 (EILQNNRVID…QHDMSGYLER (217 aa)) is b. Residues 560–634 (LLKEAGQQAP…LNSLLLAMAD (75 aa)) are c.

Belongs to the heat shock protein 90 family. Homodimer.

Its subcellular location is the cytoplasm. Its function is as follows. Molecular chaperone. Has ATPase activity. The protein is Chaperone protein HtpG of Nitrosococcus oceani (strain ATCC 19707 / BCRC 17464 / JCM 30415 / NCIMB 11848 / C-107).